The chain runs to 589 residues: CTP synthase (589 aa).

The amidoligase domain stretch occupies residues 1 to 281; sequence MPQSRTHSRT…DAYVVRQLGL (281 aa). Ser-23 is a CTP binding site. A UTP-binding site is contributed by Ser-23. ATP is bound by residues 24–29 and Asp-81; that span reads SLGKGL. Mg(2+)-binding residues include Asp-81 and Glu-155. Residues 162 to 164, 202 to 207, and Lys-238 contribute to the CTP site; these read DIE and KTKPTQ. Residues 202–207 and Lys-238 contribute to the UTP site; that span reads KTKPTQ. A Glutamine amidotransferase type-1 domain is found at 306 to 554; that stretch reads RIALVGKYVD…VDAALRHKLE (249 aa). Gly-369 lines the L-glutamine pocket. Cys-396 functions as the Nucleophile; for glutamine hydrolysis in the catalytic mechanism. L-glutamine contacts are provided by residues 397–400, Glu-419, and Arg-480; that span reads LGLQ. Catalysis depends on residues His-527 and Glu-529. The segment at 562–589 is disordered; sequence HGEERAAADDEIAESADRDEVASVDSAG.

It belongs to the CTP synthase family. As to quaternary structure, homotetramer.

It carries out the reaction UTP + L-glutamine + ATP + H2O = CTP + L-glutamate + ADP + phosphate + 2 H(+). The enzyme catalyses L-glutamine + H2O = L-glutamate + NH4(+). The catalysed reaction is UTP + NH4(+) + ATP = CTP + ADP + phosphate + 2 H(+). It participates in pyrimidine metabolism; CTP biosynthesis via de novo pathway; CTP from UDP: step 2/2. With respect to regulation, allosterically activated by GTP, when glutamine is the substrate; GTP has no effect on the reaction when ammonia is the substrate. The allosteric effector GTP functions by stabilizing the protein conformation that binds the tetrahedral intermediate(s) formed during glutamine hydrolysis. Inhibited by the product CTP, via allosteric rather than competitive inhibition. Functionally, catalyzes the ATP-dependent amination of UTP to CTP with either L-glutamine or ammonia as the source of nitrogen. Regulates intracellular CTP levels through interactions with the four ribonucleotide triphosphates. This chain is CTP synthase, found in Rhodococcus opacus (strain B4).